Consider the following 1312-residue polypeptide: Bifunctional protein PutA (1312 aa).

A proline dehydrogenase region spans residues 228–574 (LSRSLNRIIG…SFVNRIADNT (347 aa)). The interval 653–1119 (QPVAEGEMQP…LSSRPQDAVG (467 aa)) is aldehyde dehydrogenase. Residues glutamate 883 and cysteine 917 contribute to the active site.

In the N-terminal section; belongs to the proline dehydrogenase family. This sequence in the C-terminal section; belongs to the aldehyde dehydrogenase family. FAD is required as a cofactor.

The enzyme catalyses L-proline + a quinone = (S)-1-pyrroline-5-carboxylate + a quinol + H(+). It carries out the reaction L-glutamate 5-semialdehyde + NAD(+) + H2O = L-glutamate + NADH + 2 H(+). The protein operates within amino-acid degradation; L-proline degradation into L-glutamate; L-glutamate from L-proline: step 1/2. It participates in amino-acid degradation; L-proline degradation into L-glutamate; L-glutamate from L-proline: step 2/2. Its function is as follows. Oxidizes proline to glutamate for use as a carbon and nitrogen source and also function as a transcriptional repressor of the put operon. This chain is Bifunctional protein PutA (putA), found in Klebsiella aerogenes (Enterobacter aerogenes).